We begin with the raw amino-acid sequence, 312 residues long: DDRGK domain-containing protein 1 (312 aa).

Residues 1 to 2 (ME) are Lumenal-facing. The chain crosses the membrane as a helical span at residues 3-23 (LIILVGIATALLVVIITLYLL). Residues 24–312 (QKKNAAPETK…ISAGGEEASS (289 aa)) are Cytoplasmic-facing. A compositionally biased stretch (low complexity) spans 59–79 (NQRNRLRQNAPAAPAGQVAPA). Residues 59–162 (NQRNRLRQNA…RKHQEDLEAE (104 aa)) are disordered. Over residues 110 to 162 (LDEKMGAKKRAKMEAKEQKRLQREQELHDREQRKVKEAKEEAERKHQEDLEAE) the composition is skewed to basic and acidic residues.

Belongs to the DDRGK1 family. As to quaternary structure, interacts with Atg9; the interaction is transient.

The protein localises to the endoplasmic reticulum membrane. Its function is as follows. Substrate adapter for ufmylation, the covalent attachment of the ubiquitin-like modifier UFM1 to substrate proteins. Required for ufmylation of Atg9; protects the nervous system during aging, possibly by stabilizing Atg9 and supporting its function. The chain is DDRGK domain-containing protein 1 from Drosophila yakuba (Fruit fly).